The chain runs to 372 residues: Cell division protein FtsZ 1 (372 aa).

Residues 51–55, 138–140, E169, R173, and D216 contribute to the GTP site; these read GAGCN and GTG. The segment covering 350 to 360 has biased composition (acidic residues); that stretch reads PEEETPLETPE. Positions 350 to 372 are disordered; the sequence is PEEETPLETPEESPSIEISIPEL. The segment covering 361–372 has biased composition (low complexity); that stretch reads ESPSIEISIPEL.

Belongs to the FtsZ family. In terms of assembly, homodimer. Polymerizes to form a dynamic ring structure in a strictly GTP-dependent manner. Interacts directly with several other division proteins.

It is found in the cytoplasm. In terms of biological role, essential cell division protein that forms a contractile ring structure (Z ring) at the future cell division site. The regulation of the ring assembly controls the timing and the location of cell division. One of the functions of the FtsZ ring is to recruit other cell division proteins to the septum to produce a new cell wall between the dividing cells. Binds GTP and shows GTPase activity. The protein is Cell division protein FtsZ 1 of Pyrococcus furiosus (strain ATCC 43587 / DSM 3638 / JCM 8422 / Vc1).